We begin with the raw amino-acid sequence, 105 residues long: Heat shock protein HspQ (105 aa).

Positions 76–105 (EMRDEHPEQPSMDELARTIRKQLQAPRLRN) are disordered.

It belongs to the HspQ family.

Its subcellular location is the cytoplasm. In terms of biological role, involved in the degradation of certain denaturated proteins, including DnaA, during heat shock stress. The sequence is that of Heat shock protein HspQ from Salmonella agona (strain SL483).